Here is a 116-residue protein sequence, read N- to C-terminus: Venom protein 54.1 (116 aa).

An N-terminal signal peptide occupies residues 1 to 19; the sequence is MNFQVFSLIFFNFVYYCSC.

Post-translationally, contains 3 disulfide bonds. Expressed by the venom gland.

The protein resides in the secreted. This Lychas mucronatus (Chinese swimming scorpion) protein is Venom protein 54.1.